A 159-amino-acid chain; its full sequence is Putative ribosomal RNA large subunit methyltransferase H (159 aa).

S-adenosyl-L-methionine-binding positions include Leu-76, Gly-108, and 127–132; that span reads LSAMTF.

It belongs to the RNA methyltransferase RlmH family.

Its subcellular location is the cytoplasm. The enzyme catalyses pseudouridine(1915) in 23S rRNA + S-adenosyl-L-methionine = N(3)-methylpseudouridine(1915) in 23S rRNA + S-adenosyl-L-homocysteine + H(+). Functionally, specifically methylates the pseudouridine at position 1915 (m3Psi1915) in 23S rRNA. This chain is Putative ribosomal RNA large subunit methyltransferase H, found in Methanospirillum hungatei JF-1 (strain ATCC 27890 / DSM 864 / NBRC 100397 / JF-1).